A 397-amino-acid chain; its full sequence is Transcription factor xenB (397 aa).

The segment at Thr-220 to Ser-249 is disordered. Residues Arg-229–Glu-240 show a composition bias toward polar residues.

Transcription factor; part of the gene cluster that mediates the biosynthesis of xenoacremones such as xenoacremone A, a compound that shows inhibitory activity toward the PI3K/AKT signaling pathway and which has the ability to induce apoptosis of A549 lung cancer cells. Acts as a positive regulator of the xenoacremones biosynthesis gene cluster. In Xenoacremonium sinensis (Endophyte fungus), this protein is Transcription factor xenB.